Reading from the N-terminus, the 184-residue chain is ATP synthase subunit b, chloroplastic (184 aa).

The helical transmembrane segment at Leu27–Leu49 threads the bilayer.

The protein belongs to the ATPase B chain family. F-type ATPases have 2 components, F(1) - the catalytic core - and F(0) - the membrane proton channel. F(1) has five subunits: alpha(3), beta(3), gamma(1), delta(1), epsilon(1). F(0) has four main subunits: a(1), b(1), b'(1) and c(10-14). The alpha and beta chains form an alternating ring which encloses part of the gamma chain. F(1) is attached to F(0) by a central stalk formed by the gamma and epsilon chains, while a peripheral stalk is formed by the delta, b and b' chains.

It is found in the plastid. Its subcellular location is the chloroplast thylakoid membrane. In terms of biological role, f(1)F(0) ATP synthase produces ATP from ADP in the presence of a proton or sodium gradient. F-type ATPases consist of two structural domains, F(1) containing the extramembraneous catalytic core and F(0) containing the membrane proton channel, linked together by a central stalk and a peripheral stalk. During catalysis, ATP synthesis in the catalytic domain of F(1) is coupled via a rotary mechanism of the central stalk subunits to proton translocation. Component of the F(0) channel, it forms part of the peripheral stalk, linking F(1) to F(0). The polypeptide is ATP synthase subunit b, chloroplastic (Cicer arietinum (Chickpea)).